The chain runs to 127 residues: Large ribosomal subunit protein bL17 (127 aa).

Belongs to the bacterial ribosomal protein bL17 family. Part of the 50S ribosomal subunit. Contacts protein L32.

The chain is Large ribosomal subunit protein bL17 from Xanthomonas campestris pv. campestris (strain 8004).